The following is a 360-amino-acid chain: DNA replication and repair protein RecF (360 aa).

30 to 37 (GHNGSGKT) is an ATP binding site.

It belongs to the RecF family.

The protein localises to the cytoplasm. The RecF protein is involved in DNA metabolism; it is required for DNA replication and normal SOS inducibility. RecF binds preferentially to single-stranded, linear DNA. It also seems to bind ATP. This Actinobacillus pleuropneumoniae serotype 3 (strain JL03) protein is DNA replication and repair protein RecF.